The sequence spans 299 residues: Inactive recombination-promoting nuclease-like protein RpnE (299 aa).

This sequence belongs to the Rpn/YhgA-like nuclease family.

Upon expression has no effect on RecA-independent DNA recombination, cell viability or DNA damage. The protein is Inactive recombination-promoting nuclease-like protein RpnE (yfaD) of Escherichia coli (strain K12).